The primary structure comprises 86 residues: Muscarinic toxin-like protein (86 aa).

The first 21 residues, M1 to T21, serve as a signal peptide directing secretion. Cystine bridges form between C24–C45, C38–C62, C66–C78, and C79–C84.

The protein belongs to the three-finger toxin family. Short-chain subfamily. Orphan group VIII (haditoxin) sub-subfamily. Homodimer; non-covalently linked. In terms of tissue distribution, expressed by the venom gland.

The protein localises to the secreted. Antagonist of muscle and neuronal nicotinic acetylcholine receptors (nAChR) with highest affinity for neuronal alpha-7/CHRNA7 nAChRs. The polypeptide is Muscarinic toxin-like protein (Bungarus multicinctus (Many-banded krait)).